The following is a 177-amino-acid chain: Calerythrin (177 aa).

EF-hand domains lie at 5 to 40, 45 to 90, 100 to 134, and 134 to 169; these read IASDRLKKRFDRWDFDGNGALERADFEKEAQHIAEA, AGAA…NLIF, VLGPVVKGTWGMCDKNADGQINADEFAAWLTALGM, and MSKAEAAEAFNQVDTNGNGELSLDELLTAVRDFHFG. Ca(2+) is bound by residues D18, D20, N22, and D29. D113, N115, D117, Q119, E124, D147, N149, N151, E153, and E158 together coordinate Ca(2+).

The sequence is that of Calerythrin from Saccharopolyspora erythraea (Streptomyces erythraeus).